We begin with the raw amino-acid sequence, 910 residues long: Eukaryotic translation initiation factor 3 subunit C (910 aa).

The tract at residues 1 to 21 is disordered; sequence MSRFFANGSESESESSEEEIQ. Acidic residues predominate over residues 11–20; it reads SESESSEEEI. 4 positions are modified to phosphoserine: serine 34, serine 165, serine 176, and serine 185. Residues 157–281 form a disordered region; it reads FREAPDQESE…KRAEDDEDGE (125 aa). Positions 162–186 are enriched in acidic residues; that stretch reads DQESEAEDEVVALESDGGDAGDDSD. Positions 193-207 are enriched in low complexity; that stretch reads EAAPKAVKSAPAKAA. Over residues 209–235 the composition is skewed to acidic residues; it reads ADDDDSDDSIDWDSDSESETESSDDEN. The segment covering 240-268 has biased composition (basic and acidic residues); sequence MRERFLKRTTEKEEKDDDKRKDKRKEQKT. The 177-residue stretch at 639 to 815 folds into the PCI domain; the sequence is FHMHINLELL…ETVGMHRSEP (177 aa). Residues 847-910 are disordered; that stretch reads FFQRGNMGNR…QQQVQTIDEE (64 aa). Low complexity predominate over residues 862–874; that stretch reads NRNQNNQGGNWLG. Residues 882 to 891 are compositionally biased toward basic residues; the sequence is RNRNQRGHHK. Over residues 895–910 the composition is skewed to low complexity; that stretch reads DRQQQQQQQVQTIDEE.

This sequence belongs to the eIF-3 subunit C family. In terms of assembly, component of the eukaryotic translation initiation factor 3 (eIF-3) complex. The eIF-3 complex interacts with pix.

It is found in the cytoplasm. In terms of biological role, component of the eukaryotic translation initiation factor 3 (eIF-3) complex, which is involved in protein synthesis of a specialized repertoire of mRNAs and, together with other initiation factors, stimulates binding of mRNA and methionyl-tRNAi to the 40S ribosome. The eIF-3 complex specifically targets and initiates translation of a subset of mRNAs involved in cell proliferation. The protein is Eukaryotic translation initiation factor 3 subunit C of Drosophila sechellia (Fruit fly).